The primary structure comprises 348 residues: Phosphate acyltransferase (348 aa).

This sequence belongs to the PlsX family. As to quaternary structure, homodimer. Probably interacts with PlsY.

The protein localises to the cytoplasm. It carries out the reaction a fatty acyl-[ACP] + phosphate = an acyl phosphate + holo-[ACP]. Its pathway is lipid metabolism; phospholipid metabolism. Its function is as follows. Catalyzes the reversible formation of acyl-phosphate (acyl-PO(4)) from acyl-[acyl-carrier-protein] (acyl-ACP). This enzyme utilizes acyl-ACP as fatty acyl donor, but not acyl-CoA. The protein is Phosphate acyltransferase of Oenococcus oeni (strain ATCC BAA-331 / PSU-1).